The sequence spans 441 residues: Zinc finger protein ZIC 3 (441 aa).

A C2H2-type 1; atypical zinc finger spans residues 222-257; the sequence is LSCKWLEESTMNHPQKTCDRTFSSMHELVTHMTMEH. Residues 266–293 form a C2H2-type 2; atypical zinc finger; sequence HICYWEECPRGGKSFKAKYKLVNHIRVH. 3 C2H2-type zinc fingers span residues 299–323, 329–353, and 359–381; these read FPCP…KRTH, FKCE…MHVH, and YICK…MKVH. Residues 375–441 are disordered; the sequence is RKHMKVHESQ…LPPNFNEWYV (67 aa). A compositionally biased stretch (low complexity) spans 383-399; sequence SQGSDSSPAASSGYESA. Positions 406 to 429 are enriched in polar residues; the sequence is SANSEEPSKNSSATHQTNNNSHNT.

Belongs to the GLI C2H2-type zinc-finger protein family. In terms of tissue distribution, first detected at early gastrula (stage 10.25) in the dorsal lip and prospective neural plate. Also expressed in the mesoderm at early gastrulation, with expression strongest on the dorsal side. Mesodermal expression continues at stage 12 but is hardly detectable after stage 14. As gastrulation proceeds, expression decreases in the dorsal lip and increases in the prospective neural plate. At the neural plate stage (stage 14), expressed strongly in the prospective mesencephalon and anterior rhombencephalon, after which expression becomes stronger in the anterior neural folds. At early tailbud stage (stage 20), expression becomes restricted to the dorsal region of forebrain, midbrain and hindbrain, and weakly to the dorsal trunk. After mid-tailbud stage, expression decreases in the diencephalon, appears in the lateral mesoderm of the tailbud region and becomes restricted in the dorsal part of the neural tube.

It localises to the nucleus. Its subcellular location is the cytoplasm. Its function is as follows. Probably acts as a transcriptional activator. May bind to the minimal GLI-consensus sequence 5'-GGGTGGTC-3'. Can determine the ectodermal cell fate and promote the earliest step of neural and neural crest development. Involved in establishing left-right asymmetry in the embryo. This Xenopus laevis (African clawed frog) protein is Zinc finger protein ZIC 3 (zic3).